Consider the following 491-residue polypeptide: Adenylosuccinate synthetase, chloroplastic (491 aa).

GTP-binding positions include 78–84 (GDEGKGK) and 106–108 (GHT). The active-site Proton acceptor is the Asp79. Mg(2+) is bound by residues Asp79 and Gly106. Residues 79–82 (DEGK), 104–107 (NAGH), Thr196, Arg210, Gln290, Thr305, and Arg369 contribute to the IMP site. The active-site Proton donor is His107. 365-371 (TTTGRPR) contacts substrate. GTP-binding positions include Arg371, 397-399 (KLD), and 480-482 (GIG).

This sequence belongs to the adenylosuccinate synthetase family. As to quaternary structure, homodimer. Mg(2+) serves as cofactor.

It is found in the plastid. Its subcellular location is the chloroplast. It carries out the reaction IMP + L-aspartate + GTP = N(6)-(1,2-dicarboxyethyl)-AMP + GDP + phosphate + 2 H(+). The protein operates within purine metabolism; AMP biosynthesis via de novo pathway; AMP from IMP: step 1/2. Its function is as follows. Plays an important role in the de novo pathway and in the salvage pathway of purine nucleotide biosynthesis. Catalyzes the first committed step in the biosynthesis of AMP from IMP. In Populus trichocarpa (Western balsam poplar), this protein is Adenylosuccinate synthetase, chloroplastic.